A 68-amino-acid polypeptide reads, in one-letter code: Neuronal regeneration-related protein (68 aa).

The interval 42 to 68 (EETGAASLTPPGSREFTSPATSYLHPF) is disordered.

In terms of assembly, interacts with FLNA. Interacts with the latency-associated peptides (LAP) of TGFB1 and TGFB2; the interaction results in a decrease in TGFB autoinduction. In terms of processing, phosphorylated on Ser-59. Phosphorylation decreases stability and activity. As to expression, expressed in brain and fetal lung.

The protein localises to the cytoplasm. May have roles in cellular differentiation. Ectopic expression induces differentiation of fibroblast into myofibroblast and myofibroblast ameboid migration. Increases retinoic-acid regulation of lipid-droplet biogenesis. May also have neural functions. Promotes axonal regeneration and augments motility of gliomas. Down-regulates the expression of TGFB1 and TGFB2 but not of TGFB3. May play a role in the regulation of alveolar generation. This chain is Neuronal regeneration-related protein (Nrep), found in Mus musculus (Mouse).